The primary structure comprises 288 residues: MMIDKLYKRVEKNGHVCAGLDTSLDYIPEYFKTKYFNEEDIIFNFNKEIIDATYDKVACFKIQIAYYEALGLKGLRAYKRTLDYIKESDGIVISDIKRGDISSTAKMYARAHFEGDFETDFITLSPYMGLDSIEPYFEYMKQKGKGVFVLVRTSNEGAKDIEFIESKDGNKVYEIIGKKLKNMGQDFLGNCGYSSIGGVVGCTHIDEAVKLRKDLGGMFFLIPGYGAQGGKAEDVALYLKNGNGGVVNSSRGILLAYKKQNDEKNFAKCSRNEVIRMRDDILQAINSK.

K97 acts as the Proton donor in catalysis.

Belongs to the OMP decarboxylase family. Type 2 subfamily.

The enzyme catalyses orotidine 5'-phosphate + H(+) = UMP + CO2. It participates in pyrimidine metabolism; UMP biosynthesis via de novo pathway; UMP from orotate: step 2/2. This is Orotidine 5'-phosphate decarboxylase from Clostridium tetani (strain Massachusetts / E88).